A 206-amino-acid polypeptide reads, in one-letter code: LexA repressor (206 aa).

The H-T-H motif DNA-binding region spans 28–48; the sequence is VREICAAVGLSSTSTVHGHLT. Catalysis depends on for autocatalytic cleavage activity residues S127 and K165.

The protein belongs to the peptidase S24 family. As to quaternary structure, homodimer.

It carries out the reaction Hydrolysis of Ala-|-Gly bond in repressor LexA.. Represses a number of genes involved in the response to DNA damage (SOS response), including recA and lexA. In the presence of single-stranded DNA, RecA interacts with LexA causing an autocatalytic cleavage which disrupts the DNA-binding part of LexA, leading to derepression of the SOS regulon and eventually DNA repair. The chain is LexA repressor from Lactobacillus delbrueckii subsp. bulgaricus (strain ATCC 11842 / DSM 20081 / BCRC 10696 / JCM 1002 / NBRC 13953 / NCIMB 11778 / NCTC 12712 / WDCM 00102 / Lb 14).